Here is a 174-residue protein sequence, read N- to C-terminus: Small ribosomal subunit protein uS5c (174 aa).

Residues 17 to 80 (WEERVVQVKR…TDAKKHLVTV (64 aa)) enclose the S5 DRBM domain.

The protein belongs to the universal ribosomal protein uS5 family. In terms of assembly, part of the 30S ribosomal subunit. Contacts protein S4.

Its subcellular location is the plastid. It localises to the chloroplast. With S4 and S12 plays an important role in translational accuracy. The polypeptide is Small ribosomal subunit protein uS5c (rps5) (Pyropia yezoensis (Susabi-nori)).